Consider the following 369-residue polypeptide: MEMSSEQLNGSQVWVSSPFDLNGSLGPSNGSNQTEPYYDMTSNAVLTFIYFVVCVVGLCGNTLVIYVILRYAKMKTITNIYILNLAIADELFMLGLPFLAMQVALVHWPFGKAICRVVMTVDGINQFTSIFCLTVMSIDRYLAVVHPIKSAKWRRPRTAKMINVAVWCVSLLVILPIMIYAGLRSNQWGRSSCTINWPGESGAWYTGFIIYAFILGFLVPLTIICLCYLFIIIKVKSSGIRVGSSKRKKSEKKVTRMVSIVVAVFIFCWLPFYIFNVSSVSVAISPTPALKGMFDFVVILTYANSCANPILYAFLSDNFKKSFQNVLCLVKVSGTEDGERSDSKQDKSRLNETTETQRTLLNGDLQTSI.

Residues 1-43 (MEMSSEQLNGSQVWVSSPFDLNGSLGPSNGSNQTEPYYDMTSN) are Extracellular-facing. Asn-9, Asn-22, Asn-29, and Asn-32 each carry an N-linked (GlcNAc...) asparagine glycan. The helical transmembrane segment at 44-67 (AVLTFIYFVVCVVGLCGNTLVIYV) threads the bilayer. Residues 68–78 (ILRYAKMKTIT) are Cytoplasmic-facing. Residues 79 to 103 (NIYILNLAIADELFMLGLPFLAMQV) traverse the membrane as a helical segment. At 104-118 (ALVHWPFGKAICRVV) the chain is on the extracellular side. Cys-115 and Cys-193 are oxidised to a cystine. A helical membrane pass occupies residues 119-138 (MTVDGINQFTSIFCLTVMSI). The Cytoplasmic portion of the chain corresponds to 139-161 (DRYLAVVHPIKSAKWRRPRTAKM). Residues 162–181 (INVAVWCVSLLVILPIMIYA) form a helical membrane-spanning segment. The Extracellular segment spans residues 182-207 (GLRSNQWGRSSCTINWPGESGAWYTG). Residues 208–229 (FIIYAFILGFLVPLTIICLCYL) traverse the membrane as a helical segment. At 230 to 253 (FIIIKVKSSGIRVGSSKRKKSEKK) the chain is on the cytoplasmic side. The helical transmembrane segment at 254-278 (VTRMVSIVVAVFIFCWLPFYIFNVS) threads the bilayer. The Extracellular portion of the chain corresponds to 279–288 (SVSVAISPTP). A helical membrane pass occupies residues 289-303 (ALKGMFDFVVILTYA). The Cytoplasmic segment spans residues 304–369 (NSCANPILYA…LLNGDLQTSI (66 aa)). Residue Cys-328 is the site of S-palmitoyl cysteine attachment. A phosphoserine mark is found at Ser-341, Ser-343, and Ser-348. Phosphothreonine is present on residues Thr-353 and Thr-354.

This sequence belongs to the G-protein coupled receptor 1 family. In terms of assembly, homodimer and heterodimer with SSTR3 and SSTR5. Heterodimerization with SSTR3 inactivates SSTR3 receptor function. Heterodimerization with SSTR5 is enhanced by agonist stimulation of SSTR2 and increases SSTR2 cell growth inhibition activity. Following agonist stimulation, homodimers dissociate into monomers which is required for receptor internalization. Interacts with beta-arrestin; this interaction is necessary for receptor internalization and is destabilized by heterodimerization with SSTR5 which results in increased recycling of SSTR2 to the cell surface. Interacts (via C-terminus) with SHANK1 (via PDZ domain). Phosphorylated on serine and threonine residues in response to agonist stimulation, leading to receptor desensitization and rapid internalization. Phosphorylated to a greater extent on serine than threonine residues. Threonine phosphorylation is required for arrestin binding and receptor endocytosis but is not necessary for desensitization. In terms of tissue distribution, cerebrum and kidney.

The protein localises to the cell membrane. It localises to the cytoplasm. In terms of biological role, receptor for somatostatin-14 and -28. This receptor is coupled via pertussis toxin sensitive G proteins to inhibition of adenylyl cyclase. In addition it stimulates phosphotyrosine phosphatase and PLC via pertussis toxin insensitive as well as sensitive G proteins. Inhibits calcium entry by suppressing voltage-dependent calcium channels. Acts as the functionally dominant somatostatin receptor in pancreatic alpha- and beta-cells where it mediates the inhibitory effect of somatostatin-14 on hormone secretion. Inhibits cell growth through enhancement of MAPK1 and MAPK2 phosphorylation and subsequent up-regulation of CDKN1B. Stimulates neuronal migration and axon outgrowth and may participate in neuron development and maturation during brain development. Mediates negative regulation of insulin receptor signaling through PTPN6. Inactivates SSTR3 receptor function following heterodimerization. The polypeptide is Somatostatin receptor type 2 (Sstr2) (Mus musculus (Mouse)).